The following is a 345-amino-acid chain: Acyl-CoA--sterol O-acyltransferase 1 (345 aa).

9 helical membrane-spanning segments follow: residues 1-21 (MASF…TFFI), 32-52 (LILF…IYSL), 54-74 (LLGI…LLFA), 86-106 (PLSL…QLSP), 120-140 (GPLI…AYEY), 148-168 (VVLT…LAAT), 231-251 (ILAA…IFFY), 258-278 (DWKM…EIAI), and 291-311 (AISQ…LFLP).

This sequence belongs to the wax synthase family.

It is found in the membrane. In terms of biological role, involved in the esterification of cycloartenol. Not implicated in the formation of sterol esters in flowers or during seed maturation. Has a substrate preference toward saturated fatty acyl donors (16:0 &gt; 18:0 &gt; 16:1 &gt; 18:1). Does not require triacyglycerols (TAGs) as a fatty acyl donor, and is unable to acylate diacylglycerol to produce TAG. The chain is Acyl-CoA--sterol O-acyltransferase 1 (ASAT1) from Arabidopsis thaliana (Mouse-ear cress).